We begin with the raw amino-acid sequence, 137 residues long: Large ribosomal subunit protein uL16 (137 aa).

Belongs to the universal ribosomal protein uL16 family. In terms of assembly, part of the 50S ribosomal subunit.

Binds 23S rRNA and is also seen to make contacts with the A and possibly P site tRNAs. The sequence is that of Large ribosomal subunit protein uL16 from Pseudomonas entomophila (strain L48).